The following is a 2513-amino-acid chain: Polyprotein P1234 (2513 aa).

The Alphavirus-like MT domain occupies 28–259 (EPKQVTPNDH…ESRKLLQSWH (232 aa)). A nsP1 membrane-binding region spans residues 244–263 (GSTLYPESRKLLQSWHLPSV). S-palmitoyl cysteine; by host attachment occurs at residues Cys-417 and Cys-419. Positions 690–842 (DLTSPPYHEF…HNICTQVYHK (153 aa)) constitute a (+)RNA virus helicase ATP-binding domain. 721-728 (GVPGSGKS) is an a ribonucleoside 5'-triphosphate binding site. The region spanning 843-991 (SISRRCTLPV…IKEWEAEHAS (149 aa)) is the (+)RNA virus helicase C-terminal domain. The Peptidase C9 domain maps to 1004–1327 (DTFQNKANVC…NQLNAVYAGL (324 aa)). The tract at residues 1005–1024 (TFQNKANVCWAKCLVPILDT) is nucleolus localization signal. The active-site For cysteine protease nsP2 activity is Cys-1013. The short motif at 1058-1067 (TRIYGVDLDS) is the Nuclear export signal element. His-1083 serves as the catalytic For cysteine protease nsP2 activity. The short motif at 1182-1186 (PTKRV) is the Nuclear localization signal element. Residues Asp-1343, Asn-1357, Gly-1365, Gly-1445, Val-1446, and Tyr-1447 each coordinate ADP-D-ribose. Positions 1595, 1597, 1620, and 1638 each coordinate Zn(2+). 2 short sequence motifs (FGDF; binding to host G3BP1) span residues 1851-1854 (FGDF) and 1869-1872 (FGDF). A RdRp catalytic domain is found at 2267–2382 (DAVLETDIAS…HGVVSDALMA (116 aa)).

Interacts with non-structural protein 3. Interacts with RNA-directed RNA polymerase nsP4. Interacts with protease nsP2. interacts with itself. In terms of assembly, interacts with mRNA-capping enzyme nsP1. Interacts with host DDX1. Interacts with host DDX3. Interacts (via C-terminus) with host G3BP1; this interaction inhibits the formation of host stress granules on viral mRNAs and the nsp3-G3BP1 complexes bind viral RNAs and probably orchestrate the assembly of viral replication complexes. Interacts (via C-terminus) with host G3BP2; this interaction inhibits the formation of host stress granules on viral mRNAs and the nsp3-G3BP2 complexes bind viral RNAs and probably orchestrate the assembly of viral replication complexes. As to quaternary structure, interacts with mRNA-capping enzyme nsP1. Interacts with protease nsP2. interacts with itself. Interacts with RNA-directed RNA polymerase nsP4. Interacts with mRNA-capping enzyme nsP1. Interacts with KPNA1/karyopherin-alpha1; this interaction probably allows the active transport of protease nsP2 into the host nucleus. The cofactor is Mg(2+). Requires Mn(2+) as cofactor. Post-translationally, specific enzymatic cleavages in vivo yield mature proteins. The processing of the polyprotein is temporally regulated. In early stages (1.7 hpi), P1234 is first cleaved in trans through its nsP2 protease activity, releasing P123' and nsP4, which associate to form the early replication complex. At the same time, P1234 is also cut at the nsP1/nsP2 site early in infection but with lower efficiency. After replication of the viral minus-strand RNAs (4 hpi), the polyproteins are cut at the nsP1/nsP2 and nsP2/nsP3 sites very efficiently, preventing accumulation of P123' and P1234 and allowing the formation of the late replication complex. NsP3'/nsP4 site is not cleaved anymore and P34 is produced rather than nsP4. In terms of processing, specific enzymatic cleavages in vivo yield mature proteins. The processing of the polyprotein is temporally regulated. In early stages (1.7 hpi), P123 is cleaved at the nsP1/nsP2 site with low efficiency. After replication of the viral minus-strand RNAs (4 hpi), the polyproteins are cut at the nsP1/nsP2 and nsP2/nsP3 sites very efficiently, preventing accumulation of P123 and allowing the formation of the late replication complex. Specific enzymatic cleavages in vivo yield mature proteins. The processing of the polyprotein is temporally regulated. In early stages (1.7 hpi), P123 is cleaved at the nsP1/nsP2 site with low efficiency. After replication of the viral minus-strand RNAs (4 hpi), the polyproteins are cut at the nsP1/nsP2 and nsP2/nsP3 sites very efficiently, preventing accumulation of P123' and allowing the formation of the late replication complex. Post-translationally, palmitoylated by host palmitoyltransferases ZDHHC2 and ZDHHC19. In terms of processing, phosphorylated by host on serines and threonines. Ubiquitinated; targets the protein for rapid degradation via the ubiquitin system. Nsp4 is present in extremely low quantities due to low frequency of translation through the amber stop-codon and the degradation by the ubiquitin pathway.

It localises to the host cytoplasmic vesicle membrane. The protein localises to the host cell membrane. It is found in the host cell projection. Its subcellular location is the host filopodium. The protein resides in the host nucleus. It localises to the host cytoplasm. It catalyses the reaction GTP + S-adenosyl-L-methionine = N(7)-methyl-GTP + S-adenosyl-L-homocysteine. It carries out the reaction N(7)-methyl-GTP + L-histidyl-[protein] = N(tele)-(N(7)-methylguanosine 5'-phospho)-L-histidyl-[protein] + diphosphate. The enzyme catalyses N(tele)-(N(7)-methylguanosine 5'-phospho)-L-histidyl-[protein] + a 5'-end diphospho-(purine-ribonucleoside) in mRNA + H(+) = a 5'-end (N(7)-methyl 5'-triphosphoguanosine)-(purine-ribonucleoside) in mRNA + L-histidyl-[protein]. The catalysed reaction is a 5'-end triphospho-ribonucleoside in mRNA + H2O = a 5'-end diphospho-ribonucleoside in mRNA + phosphate + H(+). It catalyses the reaction a ribonucleoside 5'-triphosphate + H2O = a ribonucleoside 5'-diphosphate + phosphate + H(+). It carries out the reaction ATP + H2O = ADP + phosphate + H(+). The enzyme catalyses RNA(n) + a ribonucleoside 5'-triphosphate = RNA(n+1) + diphosphate. The catalysed reaction is 4-O-(ADP-D-ribosyl)-L-aspartyl-[protein] + H2O = L-aspartyl-[protein] + ADP-D-ribose + H(+). It catalyses the reaction 5-O-(ADP-D-ribosyl)-L-glutamyl-[protein] + H2O = L-glutamyl-[protein] + ADP-D-ribose + H(+). It carries out the reaction RNA(n) + ATP = RNA(n)-3'-adenine ribonucleotide + diphosphate. The enzyme catalyses ADP-alpha-D-ribose 1''-phosphate + H2O = ADP-D-ribose + phosphate. Its function is as follows. Inactive precursor of the viral replicase, which is activated by cleavages carried out by the viral protease nsP2. Functionally, the early replication complex formed by the polyprotein P123' and nsP4 synthesizes minus-strand RNAs. Polyprotein P123' is a short-lived polyprotein that accumulates during early stage of infection. As soon P123' is cleaved into mature proteins, the plus-strand RNAs synthesis begins. In terms of biological role, the early replication complex formed by the polyprotein P123 and nsP4 synthesizes minus-strand RNAs. As soon P123 is cleaved into mature proteins, the plus-strand RNAs synthesis begins. Cytoplasmic capping enzyme that catalyzes two virus-specific reactions: methyltransferase and nsP1 guanylyltransferase. mRNA-capping is necessary since all viral RNAs are synthesized in the cytoplasm, and host capping enzymes are restricted to the nucleus. The enzymatic reaction involves a covalent link between 7-methyl-GMP and nsP1, whereas eukaryotic capping enzymes form a covalent complex only with GMP. nsP1 capping consists in the following reactions: GTP is first methylated into 7-methyl-GMP and then is covalently linked to nsP1 to form the m7GMp-nsP1 complex from which 7-methyl-GMP complex is transferred to the mRNA to create the cap structure. NsP1 is also needed for the initiation of the minus-strand RNAs synthesis. Probably serves as a membrane anchor for the replication complex composed of nsP1-nsP4. Palmitoylated nsP1 is remodeling host cell cytoskeleton, and induces filopodium-like structure formation at the surface of the host cell. Its function is as follows. Multifunctional protein whose N-terminus is part of the RNA polymerase complex and displays NTPase, RNA triphosphatase and helicase activities. NTPase and RNA triphosphatase are involved in viral RNA capping and helicase keeps a check on the dsRNA replication intermediates. The C-terminus harbors a protease that specifically cleaves the polyproteins and releases the mature proteins. Required for the shutoff of minus-strand RNAs synthesis. Specifically inhibits the host IFN response by promoting the nuclear export of host STAT1. Also inhibits host transcription by inducing the rapid proteasome-dependent degradation of POLR2A, a catalytic subunit of the RNAPII complex. The resulting inhibition of cellular protein synthesis serves to ensure maximal viral gene expression and to evade host immune response. Functionally, seems to be essential for minus-strand RNAs and subgenomic 26S mRNAs synthesis. Displays mono-ADP-ribosylhydrolase activity. ADP-ribosylation is a post-translational modification that controls various processes of the host cell and the virus probably needs to revert it for optimal viral replication. Binds proteins of FXR family and sequesters them into the viral RNA replication complexes thereby inhibiting the formation of host stress granules on viral mRNAs. The nsp3'-FXR complexes bind viral RNAs and probably orchestrate the assembly of viral replication complexes, thanks to the ability of FXR family members to self-assemble and bind DNA. In terms of biological role, seems to be essential for minus-strand RNAs and subgenomic 26S mRNAs synthesis. Displays mono-ADP-ribosylhydrolase activity. ADP-ribosylation is a post-translational modification that controls various processes of the host cell and the virus probably needs to revert it for optimal viral replication. Binds proteins of G3BP family and sequesters them into the viral RNA replication complexes thereby inhibiting the formation of host stress granules on viral mRNAs. The nsp3-G3BP complexes bind viral RNAs and probably orchestrate the assembly of viral replication complexes, thanks to the ability of G3BP family members to self-assemble and bind DNA. RNA dependent RNA polymerase. Replicates genomic and antigenomic RNA by recognizing replications specific signals. The early replication complex formed by the polyprotein P123 and nsP4 synthesizes minus-strand RNAs. The late replication complex composed of fully processed nsP1-nsP4 is responsible for the production of genomic and subgenomic plus-strand RNAs. The protein is Polyprotein P1234 of Anopheles (Human).